The primary structure comprises 382 residues: Mannitol-1-phosphate 5-dehydrogenase (382 aa).

3–14 (ALHFGAGNIGRG) provides a ligand contact to NAD(+). The residue at position 269 (lysine 269) is an N6-acetyllysine.

This sequence belongs to the mannitol dehydrogenase family.

It carries out the reaction D-mannitol 1-phosphate + NAD(+) = beta-D-fructose 6-phosphate + NADH + H(+). The polypeptide is Mannitol-1-phosphate 5-dehydrogenase (Escherichia coli O7:K1 (strain IAI39 / ExPEC)).